Reading from the N-terminus, the 70-residue chain is uncharacterized protein (70 aa).

A helical transmembrane segment spans residues 15–37 (LLVSSISESAVALIIITIRILFS).

It localises to the membrane. This is an uncharacterized protein from Saccharomyces cerevisiae (strain ATCC 204508 / S288c) (Baker's yeast).